Here is an 81-residue protein sequence, read N- to C-terminus: ATP synthase subunit c (81 aa).

2 helical membrane-spanning segments follow: residues 5–25 and 57–77; these read IAAG…IGAG and VGLV…FVFA.

It belongs to the ATPase C chain family. As to quaternary structure, F-type ATPases have 2 components, F(1) - the catalytic core - and F(0) - the membrane proton channel. F(1) has five subunits: alpha(3), beta(3), gamma(1), delta(1), epsilon(1). F(0) has three main subunits: a(1), b(2) and c(10-14). The alpha and beta chains form an alternating ring which encloses part of the gamma chain. F(1) is attached to F(0) by a central stalk formed by the gamma and epsilon chains, while a peripheral stalk is formed by the delta and b chains.

It is found in the cell membrane. Functionally, f(1)F(0) ATP synthase produces ATP from ADP in the presence of a proton or sodium gradient. F-type ATPases consist of two structural domains, F(1) containing the extramembraneous catalytic core and F(0) containing the membrane proton channel, linked together by a central stalk and a peripheral stalk. During catalysis, ATP synthesis in the catalytic domain of F(1) is coupled via a rotary mechanism of the central stalk subunits to proton translocation. In terms of biological role, key component of the F(0) channel; it plays a direct role in translocation across the membrane. A homomeric c-ring of between 10-14 subunits forms the central stalk rotor element with the F(1) delta and epsilon subunits. This Mycolicibacterium gilvum (strain PYR-GCK) (Mycobacterium gilvum (strain PYR-GCK)) protein is ATP synthase subunit c.